The primary structure comprises 477 residues: Lactate utilization protein B (477 aa).

4Fe-4S ferredoxin-type domains lie at 304-334 (GTEF…GHSY) and 353-382 (YDDY…LHEL). 7 residues coordinate [4Fe-4S] cluster: C313, C316, C319, C323, C366, C369, and C373. A disordered region spans residues 433–477 (KEDGKITKGPGPLKQWTQIRDFPAPNKSRFRDWFEDRRKEKGEDK). Positions 461–477 (RFRDWFEDRRKEKGEDK) are enriched in basic and acidic residues.

It belongs to the LutB/YkgF family.

Is involved in L-lactate degradation and allows cells to grow with lactate as the sole carbon source. Has probably a role as an electron transporter during oxidation of L-lactate. In Bacillus licheniformis (strain ATCC 14580 / DSM 13 / JCM 2505 / CCUG 7422 / NBRC 12200 / NCIMB 9375 / NCTC 10341 / NRRL NRS-1264 / Gibson 46), this protein is Lactate utilization protein B.